The following is a 236-amino-acid chain: tRNA (guanine-N(7)-)-methyltransferase (236 aa).

S-adenosyl-L-methionine-binding residues include D35, E60, N87, and D113. Residue D113 is part of the active site. 2 residues coordinate substrate: K117 and D149.

This sequence belongs to the class I-like SAM-binding methyltransferase superfamily. TrmB family.

The enzyme catalyses guanosine(46) in tRNA + S-adenosyl-L-methionine = N(7)-methylguanosine(46) in tRNA + S-adenosyl-L-homocysteine. It functions in the pathway tRNA modification; N(7)-methylguanine-tRNA biosynthesis. Its function is as follows. Catalyzes the formation of N(7)-methylguanine at position 46 (m7G46) in tRNA. This is tRNA (guanine-N(7)-)-methyltransferase from Prochlorococcus marinus (strain MIT 9313).